A 717-amino-acid chain; its full sequence is Ribosomal RNA large subunit methyltransferase K/L (717 aa).

Residues Ile43–Leu154 form the THUMP domain.

The protein belongs to the methyltransferase superfamily. RlmKL family.

The protein resides in the cytoplasm. The catalysed reaction is guanosine(2445) in 23S rRNA + S-adenosyl-L-methionine = N(2)-methylguanosine(2445) in 23S rRNA + S-adenosyl-L-homocysteine + H(+). It carries out the reaction guanosine(2069) in 23S rRNA + S-adenosyl-L-methionine = N(2)-methylguanosine(2069) in 23S rRNA + S-adenosyl-L-homocysteine + H(+). Specifically methylates the guanine in position 2445 (m2G2445) and the guanine in position 2069 (m7G2069) of 23S rRNA. The sequence is that of Ribosomal RNA large subunit methyltransferase K/L from Aeromonas hydrophila subsp. hydrophila (strain ATCC 7966 / DSM 30187 / BCRC 13018 / CCUG 14551 / JCM 1027 / KCTC 2358 / NCIMB 9240 / NCTC 8049).